Here is a 482-residue protein sequence, read N- to C-terminus: Caspase-8 (482 aa).

The propeptide occupies 1–218; it reads MDFHSCLYDI…DMWDSPGEQE (218 aa). DED domains follow at residues 2–80 and 100–177; these read DFHS…RVLK and AYRV…RIDD. Residues S188 and S213 each carry the phosphoserine modification. H319 is an active-site residue. Y336 is subject to Phosphotyrosine. Residue C362 is part of the active site. The propeptide occupies 379–388; the sequence is LEQEHVLEED. Phosphoserine; by CDK1 is present on S390.

It belongs to the peptidase C14A family. In terms of assembly, heterotetramer that consists of two anti-parallel arranged heterodimers, each one formed by a 18 kDa (p18) and a 10 kDa (p10) subunit. Component of the death-induced signaling complex (DISC) composed of cell surface receptor FAS/CD95 or TNFRSF1A, adapter protein FADD and the CASP8 protease; recruitment of CASP8 to the complex is required for processing of CASP8 into the p18 and p10 subunits. Component of the AIM2 PANoptosome complex, a multiprotein complex that drives inflammatory cell death (PANoptosis). Interacts with CFLAR and PEA15. Interacts with RFFL and RNF34; negatively regulate CASP8 through proteasomal degradation. Interacts with TNFAIP8L2. Interacts with CASP8AP2. Interacts with NOL3; decreases CASP8 activity in a mitochondria localization- and phosphorylation-dependent manner and this interaction is dissociated by calcium. Interacts with UBR2. Interacts with RIPK1. Interacts with stimulated TNFRSF10B; this interaction is followed by CASP8 proteolytic cleavage and activation. Generation of the subunits requires association with the death-inducing signaling complex (DISC), whereas additional processing is likely due to the autocatalytic activity of the activated protease. GZMB and CASP10 can be involved in these processing events. Post-translationally, phosphorylation on Ser-389 during mitosis by CDK1 inhibits activation by proteolysis and prevents apoptosis. This phosphorylation occurs in cancer cell lines, as well as in primary breast tissues and lymphocytes.

The protein localises to the cytoplasm. It is found in the nucleus. It catalyses the reaction Strict requirement for Asp at position P1 and has a preferred cleavage sequence of (Leu/Asp/Val)-Glu-Thr-Asp-|-(Gly/Ser/Ala).. Its activity is regulated as follows. CASP8 activity is restricted by RIPK1. Its function is as follows. Thiol protease that plays a key role in programmed cell death by acting as a molecular switch for apoptosis, necroptosis and pyroptosis, and is required to prevent tissue damage during embryonic development and adulthood. Initiator protease that induces extrinsic apoptosis by mediating cleavage and activation of effector caspases responsible for FAS/CD95-mediated and TNFRSF1A-induced cell death. Cleaves and activates effector caspases CASP3, CASP4, CASP6, CASP7, CASP9 and CASP10. Binding to the adapter molecule FADD recruits it to either receptor FAS/CD95 or TNFRSF1A. The resulting aggregate called the death-inducing signaling complex (DISC) performs CASP8 proteolytic activation. The active dimeric enzyme is then liberated from the DISC and free to activate downstream apoptotic proteases. Proteolytic fragments of the N-terminal propeptide (termed CAP3, CAP5 and CAP6) are likely retained in the DISC. In addition to extrinsic apoptosis, also acts as a negative regulator of necroptosis: acts by cleaving RIPK1 at 'Asp-325', which is crucial to inhibit RIPK1 kinase activity, limiting TNF-induced apoptosis, necroptosis and inflammatory response. Also able to initiate pyroptosis by mediating cleavage and activation of gasdermin-C and -D (GSDMC and GSDMD, respectively): gasdermin cleavage promotes release of the N-terminal moiety that binds to membranes and forms pores, triggering pyroptosis. Initiates pyroptosis following inactivation of MAP3K7/TAK1. Also acts as a regulator of innate immunity by mediating cleavage and inactivation of N4BP1 downstream of TLR3 or TLR4, thereby promoting cytokine production. May participate in the Granzyme B (GZMB) cell death pathways. Cleaves PARP1 and PARP2. The polypeptide is Caspase-8 (Rattus norvegicus (Rat)).